The primary structure comprises 253 residues: Testis-expressed protein 101 (253 aa).

Positions 1–24 (MAACWVHYLLLLLLGVSHQTLAQS) are cleaved as a signal peptide. Residues Asn-44, Asn-112, Asn-117, Asn-121, and Asn-162 are each glycosylated (N-linked (GlcNAc...) asparagine). The 65-residue stretch at 53–117 (ETCNPGELCQ…SNYCNSSLCN (65 aa)) folds into the UPAR/Ly6 1 domain. The region spanning 143–218 (CPTCVALGSC…KETCSYHSLL (76 aa)) is the UPAR/Ly6 2 domain. The GPI-anchor amidated serine moiety is linked to residue Ser-226. Positions 227 to 253 (RASGRSTSLWVLELLLPAVLVALTHFP) are cleaved as a propeptide — removed in mature form.

As to quaternary structure, interacts with VAMP3. Interacts with LY6K. Interacts with DPEP3; co-localized on the cell surface of spermatocytes, spermatids, and testicular spermatozoa, co-localized only in cytoplasmic droplets of caput and corpus epididymal sperm. Interacts with ADAM5. In terms of processing, N-glycosylated; by high mannose and/or biantennary complex and/or certain types of hybrid oligosaccharides; possesses different oligosaccharides chains according to its subcellular localization in the testis. Sheds from membrane raft by ACE and released from the cell surface of epididymal sperm while it passes through the caput epididymis leading to disappearance of TEX101 on spermatozoa; is essential to produce fertile spermatozoa.

Its subcellular location is the cell membrane. The protein resides in the membrane raft. It is found in the cytoplasmic vesicle. It localises to the secretory vesicle. The protein localises to the acrosome. Its subcellular location is the secreted. Its function is as follows. Plays a role in fertilization by controlling binding of sperm to zona pellucida and migration of spermatozoa into the oviduct. May play a role in signal transduction and promote protein tyrosine phosphorylation. This chain is Testis-expressed protein 101, found in Cricetulus griseus (Chinese hamster).